Consider the following 96-residue polypeptide: MGLSFSGARPCCCRNNVLITDDGEVVSLTAHDFDVVDIESEEEGNFYVPPDMRVVTRAPGRQRLRSSDPPSRHTHRRTPGGACPATQFPPPMSDSE.

Gly-2 carries N-myristoyl glycine; by host lipidation. The short motif at 18–19 is the Di-leucine-like internalization motif element; sequence LI. An asp/Glu-rich (acidic) region spans residues 37-43; sequence DIESEEE. Position 40 is a phosphoserine (Ser-40). The interval 57-96 is disordered; that stretch reads RAPGRQRLRSSDPPSRHTHRRTPGGACPATQFPPPMSDSE. The segment covering 87-96 has biased composition (pro residues); it reads QFPPPMSDSE.

Belongs to the herpesviridae cytoplasmic envelopment protein 3 family. As to quaternary structure, interacts with cytoplasmic envelopment protein 2; this interaction is essential for the proper localization of each protein to the assembly complex and thus for the production of infectious virus. Interacts with gE (via C-terminus). Interacts with gD (via C-terminus). Interacts with UL56. Myristoylation and palmitoylation (probably on one or more of the nearby cysteines at the N-terminus) enable membrane-binding and Golgi apparatus-specific targeting and are essential for efficient packaging. Post-translationally, phosphorylated. Phosphorylation does not seem to be required for recycling to the host Golgi apparatus. Packaging is selective for underphosphorylated forms.

The protein localises to the virion tegument. The protein resides in the virion membrane. Its subcellular location is the host cell membrane. It is found in the host Golgi apparatus membrane. In terms of biological role, plays an important role in the cytoplasmic envelopment of tegument proteins and capsids during the assembly and egress processes. Also participates in viral entry at the fusion step probably by regulating the core fusion machinery. This chain is Cytoplasmic envelopment protein 3, found in Human herpesvirus 1 (strain KOS) (HHV-1).